The primary structure comprises 785 residues: Endonuclease MutS2 (785 aa).

Residue 332-339 coordinates ATP; the sequence is GPNTGGKT. Residues 710-785 enclose the Smr domain; sequence VDLRGMDSEE…GNGVTVVELK (76 aa).

Belongs to the DNA mismatch repair MutS family. MutS2 subfamily. Homodimer. Binds to stalled ribosomes, contacting rRNA.

Its function is as follows. Endonuclease that is involved in the suppression of homologous recombination and thus may have a key role in the control of bacterial genetic diversity. Functionally, acts as a ribosome collision sensor, splitting the ribosome into its 2 subunits. Detects stalled/collided 70S ribosomes which it binds and splits by an ATP-hydrolysis driven conformational change. Acts upstream of the ribosome quality control system (RQC), a ribosome-associated complex that mediates the extraction of incompletely synthesized nascent chains from stalled ribosomes and their subsequent degradation. Probably generates substrates for RQC. The sequence is that of Endonuclease MutS2 from Clostridium novyi (strain NT).